Reading from the N-terminus, the 203-residue chain is Urease accessory protein UreG (203 aa).

13–20 (GPVGSGKT) serves as a coordination point for GTP.

This sequence belongs to the SIMIBI class G3E GTPase family. UreG subfamily. As to quaternary structure, homodimer. UreD, UreF and UreG form a complex that acts as a GTP-hydrolysis-dependent molecular chaperone, activating the urease apoprotein by helping to assemble the nickel containing metallocenter of UreC. The UreE protein probably delivers the nickel.

It is found in the cytoplasm. Functionally, facilitates the functional incorporation of the urease nickel metallocenter. This process requires GTP hydrolysis, probably effectuated by UreG. The polypeptide is Urease accessory protein UreG (Methylobacillus flagellatus (strain ATCC 51484 / DSM 6875 / VKM B-1610 / KT)).